Here is a 249-residue protein sequence, read N- to C-terminus: Uridylate kinase (249 aa).

Lys23–Gly26 contacts ATP. The involved in allosteric activation by GTP stretch occupies residues Gly31–Gly36. Residue Gly65 coordinates UMP. Residues Gly66 and Arg70 each contribute to the ATP site. UMP is bound by residues Asp85 and Thr146 to Thr153. 3 residues coordinate ATP: Thr173, Tyr179, and Asp182.

This sequence belongs to the UMP kinase family. In terms of assembly, homohexamer.

Its subcellular location is the cytoplasm. The enzyme catalyses UMP + ATP = UDP + ADP. The protein operates within pyrimidine metabolism; CTP biosynthesis via de novo pathway; UDP from UMP (UMPK route): step 1/1. With respect to regulation, allosterically activated by GTP. Inhibited by UTP. Catalyzes the reversible phosphorylation of UMP to UDP. The protein is Uridylate kinase of Jannaschia sp. (strain CCS1).